The sequence spans 493 residues: Glutamyl-tRNA(Gln) amidotransferase subunit A (493 aa).

Catalysis depends on charge relay system residues K79 and S159. The Acyl-ester intermediate role is filled by S183.

This sequence belongs to the amidase family. GatA subfamily. Heterotrimer of A, B and C subunits.

The enzyme catalyses L-glutamyl-tRNA(Gln) + L-glutamine + ATP + H2O = L-glutaminyl-tRNA(Gln) + L-glutamate + ADP + phosphate + H(+). Allows the formation of correctly charged Gln-tRNA(Gln) through the transamidation of misacylated Glu-tRNA(Gln) in organisms which lack glutaminyl-tRNA synthetase. The reaction takes place in the presence of glutamine and ATP through an activated gamma-phospho-Glu-tRNA(Gln). The sequence is that of Glutamyl-tRNA(Gln) amidotransferase subunit A from Rhizobium meliloti (strain 1021) (Ensifer meliloti).